We begin with the raw amino-acid sequence, 250 residues long: 2,5-dichloro-2,5-cyclohexadiene-1,4-diol dehydrogenase (250 aa).

9–34 lines the NAD(+) pocket; it reads IIVTGGGSGIGRATVELLVASGANVA. Residue S141 participates in substrate binding. Y154 functions as the Proton acceptor in the catalytic mechanism.

This sequence belongs to the short-chain dehydrogenases/reductases (SDR) family.

The enzyme catalyses 2,5-dichlorocyclohexa-2,5-dien-1,4-diol + NAD(+) = 2,5-dichlorohydroquinone + NADH + H(+). It functions in the pathway xenobiotic degradation; gamma-hexachlorocyclohexane degradation. Its function is as follows. Catalyzes the dehydrogenation of 2,5-dichloro-2,5-cyclohexadiene-1,4-diol (2,5-DDOL) to 2,5-dichlorohydroquinone (2,5-DCHQ), a step in the degradation of gamma-hexachlorocyclohexane (gamma-HCH or lindane). Has an essential role in this assimilation pathway that allows S.japonicum UT26 to grow on gamma-HCH as the sole source of carbon and energy. The chain is 2,5-dichloro-2,5-cyclohexadiene-1,4-diol dehydrogenase from Sphingobium indicum (strain DSM 16413 / CCM 7287 / MTCC 6362 / UT26 / NBRC 101211 / UT26S) (Sphingobium japonicum).